A 199-amino-acid chain; its full sequence is Probable GTP-binding protein EngB (199 aa).

The 176-residue stretch at 21-196 (TKPEYAFIGR…LTYIDEINKQ (176 aa)) folds into the EngB-type G domain. GTP-binding positions include 29-36 (GRSNVGKS), 56-60 (GKTQL), 74-77 (DLPG), 141-144 (TKID), and 175-177 (TSS). The Mg(2+) site is built by Ser-36 and Thr-58.

The protein belongs to the TRAFAC class TrmE-Era-EngA-EngB-Septin-like GTPase superfamily. EngB GTPase family. Mg(2+) serves as cofactor.

Its function is as follows. Necessary for normal cell division and for the maintenance of normal septation. This chain is Probable GTP-binding protein EngB, found in Cytophaga hutchinsonii (strain ATCC 33406 / DSM 1761 / CIP 103989 / NBRC 15051 / NCIMB 9469 / D465).